Consider the following 296-residue polypeptide: Small ribosomal subunit biogenesis GTPase RsgA (296 aa).

One can recognise a CP-type G domain in the interval 65–223 (INRIGRPAVA…LADTPGFSSI (159 aa)). Residues 114 to 117 (SKAD) and 166 to 174 (GQSGAGKST) each bind GTP. Residues Cys-247, Cys-252, His-254, and Cys-260 each coordinate Zn(2+).

It belongs to the TRAFAC class YlqF/YawG GTPase family. RsgA subfamily. As to quaternary structure, monomer. Associates with 30S ribosomal subunit, binds 16S rRNA. Zn(2+) serves as cofactor.

It localises to the cytoplasm. In terms of biological role, one of several proteins that assist in the late maturation steps of the functional core of the 30S ribosomal subunit. Helps release RbfA from mature subunits. May play a role in the assembly of ribosomal proteins into the subunit. Circularly permuted GTPase that catalyzes slow GTP hydrolysis, GTPase activity is stimulated by the 30S ribosomal subunit. This is Small ribosomal subunit biogenesis GTPase RsgA from Lactobacillus acidophilus (strain ATCC 700396 / NCK56 / N2 / NCFM).